We begin with the raw amino-acid sequence, 119 residues long: Small ribosomal subunit protein bS16 (119 aa).

Basic residues predominate over residues 96-107 (RKKRRAYRQRRS). The tract at residues 96–119 (RKKRRAYRQRRSTQREEAAKDATK) is disordered. The segment covering 108-119 (TQREEAAKDATK) has biased composition (basic and acidic residues).

Belongs to the bacterial ribosomal protein bS16 family.

The sequence is that of Small ribosomal subunit protein bS16 from Chlamydia pneumoniae (Chlamydophila pneumoniae).